A 467-amino-acid polypeptide reads, in one-letter code: Asparagine--tRNA ligase (467 aa).

Belongs to the class-II aminoacyl-tRNA synthetase family. As to quaternary structure, homodimer.

The protein localises to the cytoplasm. It carries out the reaction tRNA(Asn) + L-asparagine + ATP = L-asparaginyl-tRNA(Asn) + AMP + diphosphate + H(+). This Haemophilus ducreyi (strain 35000HP / ATCC 700724) protein is Asparagine--tRNA ligase.